We begin with the raw amino-acid sequence, 276 residues long: Formamidopyrimidine-DNA glycosylase (276 aa).

Proline 2 (schiff-base intermediate with DNA) is an active-site residue. Glutamate 3 acts as the Proton donor in catalysis. The active-site Proton donor; for beta-elimination activity is the lysine 60. Histidine 93 and arginine 112 together coordinate DNA. The segment at 240–274 (NVYGKKGEPCVTCGTILEKTVVGGRGTHYCPICQP) adopts an FPG-type zinc-finger fold. The Proton donor; for delta-elimination activity role is filled by arginine 264.

It belongs to the FPG family. As to quaternary structure, monomer. Zn(2+) is required as a cofactor.

It catalyses the reaction Hydrolysis of DNA containing ring-opened 7-methylguanine residues, releasing 2,6-diamino-4-hydroxy-5-(N-methyl)formamidopyrimidine.. The enzyme catalyses 2'-deoxyribonucleotide-(2'-deoxyribose 5'-phosphate)-2'-deoxyribonucleotide-DNA = a 3'-end 2'-deoxyribonucleotide-(2,3-dehydro-2,3-deoxyribose 5'-phosphate)-DNA + a 5'-end 5'-phospho-2'-deoxyribonucleoside-DNA + H(+). Involved in base excision repair of DNA damaged by oxidation or by mutagenic agents. Acts as a DNA glycosylase that recognizes and removes damaged bases. Has a preference for oxidized purines, such as 7,8-dihydro-8-oxoguanine (8-oxoG). Has AP (apurinic/apyrimidinic) lyase activity and introduces nicks in the DNA strand. Cleaves the DNA backbone by beta-delta elimination to generate a single-strand break at the site of the removed base with both 3'- and 5'-phosphates. The protein is Formamidopyrimidine-DNA glycosylase of Bacillus cereus (strain ATCC 14579 / DSM 31 / CCUG 7414 / JCM 2152 / NBRC 15305 / NCIMB 9373 / NCTC 2599 / NRRL B-3711).